Reading from the N-terminus, the 370-residue chain is Flagellar P-ring protein (370 aa).

Positions 1-21 (MKYILIKLSIVMIFIINSASK) are cleaved as a signal peptide.

It belongs to the FlgI family. In terms of assembly, the basal body constitutes a major portion of the flagellar organelle and consists of four rings (L,P,S, and M) mounted on a central rod.

Its subcellular location is the bacterial flagellum basal body. Assembles around the rod to form the L-ring and probably protects the motor/basal body from shearing forces during rotation. The sequence is that of Flagellar P-ring protein from Wigglesworthia glossinidia brevipalpis.